Consider the following 197-residue polypeptide: 3-isopropylmalate dehydratase small subunit (197 aa).

The protein belongs to the LeuD family. LeuD type 1 subfamily. In terms of assembly, heterodimer of LeuC and LeuD.

The enzyme catalyses (2R,3S)-3-isopropylmalate = (2S)-2-isopropylmalate. Its pathway is amino-acid biosynthesis; L-leucine biosynthesis; L-leucine from 3-methyl-2-oxobutanoate: step 2/4. In terms of biological role, catalyzes the isomerization between 2-isopropylmalate and 3-isopropylmalate, via the formation of 2-isopropylmaleate. This chain is 3-isopropylmalate dehydratase small subunit, found in Acidothermus cellulolyticus (strain ATCC 43068 / DSM 8971 / 11B).